The sequence spans 392 residues: MKCLWLLVITVLCLRCDTAGTKPRRGRGSMWWGIAKAGEPNNLSPVSPGVLFMDPAVHATLRRKQRRLARENPGVLAAVAKAQYAFAECQHQFKYRRWNCSTRNFLRGKNLFGKIVDRGCRETAFIYAITSAGVTHSLARACREASIESCTCDYSHRPRAAQNPVGGRANVRVWKWGGCSDNIGFGFRFSREFVDTGERGKTLREKMNLHNNEAGRRHVQTEMKQECKCHGMSGSCTVKTCWMRLPSFRSVGDSLKDRFDGASRVMLSKADVETPAQRNEAAPHRVPRKDRYRFQLRPHNPDHKSPGVKDLVYLESSPGFCEKNPRLGIPGTHGRACNDTSIGVDGCDLMCCGRGYKTNTMFVVERCNCTFHWCCEVKCKLCRTEKVVHTCL.

Positions 1–16 (MKCLWLLVITVLCLRC) are cleaved as a signal peptide. 11 disulfides stabilise this stretch: cysteine 89-cysteine 100, cysteine 142-cysteine 150, cysteine 152-cysteine 179, cysteine 227-cysteine 241, cysteine 229-cysteine 236, cysteine 321-cysteine 352, cysteine 337-cysteine 347, cysteine 351-cysteine 391, cysteine 367-cysteine 382, cysteine 369-cysteine 379, and cysteine 374-cysteine 375. Asparagine 99 is a glycosylation site (N-linked (GlcNAc...) asparagine). Serine 233 is lipidated: O-palmitoleoyl serine; by PORCN. Residues asparagine 338 and asparagine 368 are each glycosylated (N-linked (GlcNAc...) asparagine).

The protein belongs to the Wnt family. Palmitoleoylated by porcupine. The lipid group functions as a sorting signal, targeting the ligand to polarized vesicles that transport WNT-1 to unique sites at the cell surface. Depalmitoleoylated by notum, leading to inhibit Wnt signaling pathway.

It localises to the secreted. Its subcellular location is the extracellular space. The protein resides in the extracellular matrix. Ligand for members of the frizzled family of seven transmembrane receptors. Probable developmental protein. In Bombyx mori (Silk moth), this protein is Protein Wnt-1 (WNT-1).